Reading from the N-terminus, the 352-residue chain is D-alanine--D-alanine ligase A (352 aa).

Positions 138–341 constitute an ATP-grasp domain; the sequence is KRMVQSAGLV…PPKLVGALVE (204 aa). 165–220 serves as a coordination point for ATP; the sequence is ECLGSSTLFVKPATSGSSIGVSRVSNALEYAAAFAIAAREDTKVLVEAAVCGREIE. Residues aspartate 295, glutamate 308, and asparagine 310 each contribute to the Mg(2+) site.

The protein belongs to the D-alanine--D-alanine ligase family. It depends on Mg(2+) as a cofactor. Requires Mn(2+) as cofactor.

The protein resides in the cytoplasm. The enzyme catalyses 2 D-alanine + ATP = D-alanyl-D-alanine + ADP + phosphate + H(+). It functions in the pathway cell wall biogenesis; peptidoglycan biosynthesis. Cell wall formation. The chain is D-alanine--D-alanine ligase A from Pseudomonas putida (strain ATCC 47054 / DSM 6125 / CFBP 8728 / NCIMB 11950 / KT2440).